The sequence spans 311 residues: Porphobilinogen deaminase (311 aa).

S-(dipyrrolylmethanemethyl)cysteine is present on Cys-245.

The protein belongs to the HMBS family. Monomer. Dipyrromethane is required as a cofactor.

It carries out the reaction 4 porphobilinogen + H2O = hydroxymethylbilane + 4 NH4(+). It participates in porphyrin-containing compound metabolism; protoporphyrin-IX biosynthesis; coproporphyrinogen-III from 5-aminolevulinate: step 2/4. Tetrapolymerization of the monopyrrole PBG into the hydroxymethylbilane pre-uroporphyrinogen in several discrete steps. The protein is Porphobilinogen deaminase of Deinococcus deserti (strain DSM 17065 / CIP 109153 / LMG 22923 / VCD115).